Here is a 335-residue protein sequence, read N- to C-terminus: Serpentine receptor class alpha-13 (335 aa).

The Extracellular portion of the chain corresponds to 1–25; that stretch reads MAIISSVNRTCASESLLELYRSYKY. A helical transmembrane segment spans residues 26 to 46; it reads ILSTSFNIIIPIISLFFLVYA. The Cytoplasmic segment spans residues 47 to 61; the sequence is IKQLCAQSIIQYSTR. The chain crosses the membrane as a helical span at residues 62-82; that stretch reads VLLITTILFAVCHQIAYFCFK. Topologically, residues 83–108 are extracellular; that stretch reads ADLLYTMLFKLDQPCNLQHSSYDCRF. Residues 109-129 form a helical membrane-spanning segment; that stretch reads ITIATTTSNCGMALVQLAMSI. The Cytoplasmic segment spans residues 130 to 146; that stretch reads DRVFALKFNRVYYKLKS. The chain crosses the membrane as a helical span at residues 147 to 167; sequence IPGITLALITLSISFSMFFIL. Residues 168 to 192 lie on the Extracellular side of the membrane; that stretch reads TIDDPLSGYVNHCGFYPTYSQDKFH. Residues 193-213 form a helical membrane-spanning segment; that stretch reads IFLDVTLYLAVFNFVFDIGLM. Topologically, residues 214-243 are cytoplasmic; sequence YYSYQEILWKRSYSFVNRFQSRISLKCTQA. A helical membrane pass occupies residues 244–264; it reads IFIISICQCISNVLYSGLLSL. Topologically, residues 265–278 are extracellular; it reads LMKLGRYMSSADYN. A helical membrane pass occupies residues 279–299; the sequence is LSLSLAYTTPYSCLILPILIC. The Cytoplasmic portion of the chain corresponds to 300–335; the sequence is KVLEYIKKQRTVGILSLRNQKQSMEGHMAMINSAWK.

Belongs to the nematode receptor-like protein sra family. Expressed in the AWA and AWC chemosensory neurons.

It localises to the membrane. In terms of biological role, chemosensory receptor that negatively regulates RAS/MAPK signaling during vulva induction and the negative regulation of olfaction of volitile attractants. Required for the suppression of vulval induction in response to food starvation. Signaling acts through the GPA-5 G-alpha protein subunit. This chain is Serpentine receptor class alpha-13 (sra-13), found in Caenorhabditis elegans.